A 187-amino-acid polypeptide reads, in one-letter code: Nucleoside-triphosphatase THEP1 (187 aa).

ATP-binding positions include 9-16 and 100-107; these read GRPGVGKT and LIAIDEIG.

This sequence belongs to the THEP1 NTPase family.

The catalysed reaction is a ribonucleoside 5'-triphosphate + H2O = a ribonucleoside 5'-diphosphate + phosphate + H(+). Functionally, has nucleotide phosphatase activity towards ATP, GTP, CTP, TTP and UTP. May hydrolyze nucleoside diphosphates with lower efficiency. The chain is Nucleoside-triphosphatase THEP1 from Hyperthermus butylicus (strain DSM 5456 / JCM 9403 / PLM1-5).